We begin with the raw amino-acid sequence, 390 residues long: UPF0229 protein ABC1477 (390 aa).

2 disordered regions span residues 1 to 31 and 81 to 118; these read MEKD…RHQE and VGQG…QAGE. Polar residues predominate over residues 7–16; that stretch reads RQFTISQENW. Basic and acidic residues-rich tracts occupy residues 22-31 and 86-100; these read GFQDQRRHQE and GDSK…DPNG.

It belongs to the UPF0229 family.

This chain is UPF0229 protein ABC1477, found in Shouchella clausii (strain KSM-K16) (Alkalihalobacillus clausii).